Here is a 2222-residue protein sequence, read N- to C-terminus: Protein SWEETIE (2222 aa).

10 HEAT repeats span residues 37–75 (LLCF…LVTL), 228–265 (SEFD…LGMH), 331–368 (SELQ…GVID), 510–540 (PARL…SEKE), 541–578 (AGWL…GNPE), 611–648 (CNDG…LVDI), 768–807 (QGML…GLKA), 898–936 (MALS…TIEA), 968–1008 (QGIG…WQEI), and 1029–1066 (VSVH…KDPV). Positions 1133 to 1165 (IAENDPAYTRENLGDDDEDMVSSSSGKSIRANP) are disordered. HEAT repeat units lie at residues 1238-1269 (MRPI…LLEQ), 1270-1306 (YQAQ…TSGI), 1312-1354 (VAVK…AHAS), 1372-1410 (VEFE…NLKK), 1434-1474 (EAWP…LEAE), 1550-1586 (DLCQ…NCPK), 1783-1820 (VMLK…RYNN), 1836-1874 (GDIV…HSIT), 1880-1917 (GFMS…LVSH), and 1966-2006 (AMDI…QVST). Residues 1992-2203 (EALSTMPTSF…DESSKEHVGA (212 aa)) form a disordered region. Residues 1996-2009 (TMPTSFNQVSTVES) show a composition bias toward polar residues. Residues 2010–2027 (GTDEEEEEEEDDDDDDWD) are compositionally biased toward acidic residues. Over residues 2028–2040 (TFQSFPASTNLEG) the composition is skewed to polar residues. Positions 2062 to 2072 (QDDESNAEETD) are enriched in acidic residues. Basic and acidic residues-rich tracts occupy residues 2073–2096 (DQHL…SKEV) and 2108–2124 (TRED…EETV). A compositionally biased stretch (polar residues) spans 2150 to 2164 (NEQSVESKNLESENI). Over residues 2191–2202 (SPEDESSKEHVG) the composition is skewed to basic and acidic residues.

The protein belongs to the HEATR5 family.

May regulate multiple metabolic, hormonal and stress-related pathways. Required for carbohydrate metabolism and homoeostasis. May also monitor ethylene biosynthesis and senescence. This chain is Protein SWEETIE, found in Arabidopsis thaliana (Mouse-ear cress).